A 286-amino-acid chain; its full sequence is NADPH-dependent 7-cyano-7-deazaguanine reductase (286 aa).

92–94 (IES) contacts substrate. 94–95 (SK) lines the NADPH pocket. Cys-194 acts as the Thioimide intermediate in catalysis. Residue Asp-201 is the Proton donor of the active site. 233 to 234 (HE) serves as a coordination point for substrate. 262–263 (RG) is an NADPH binding site.

This sequence belongs to the GTP cyclohydrolase I family. QueF type 2 subfamily. In terms of assembly, homodimer.

The protein resides in the cytoplasm. The catalysed reaction is 7-aminomethyl-7-carbaguanine + 2 NADP(+) = 7-cyano-7-deazaguanine + 2 NADPH + 3 H(+). It participates in tRNA modification; tRNA-queuosine biosynthesis. In terms of biological role, catalyzes the NADPH-dependent reduction of 7-cyano-7-deazaguanine (preQ0) to 7-aminomethyl-7-deazaguanine (preQ1). In Shewanella sp. (strain MR-4), this protein is NADPH-dependent 7-cyano-7-deazaguanine reductase.